The sequence spans 395 residues: MWLPRVSSTAVTALLLAQTFLLLFLVSRPGPSSPAGGEARVHVLVLSSWRSGSSFVGQLFNQHPDVFYLMEPAWHVWTTLSQGSAATLHMAVRDLVRSVFLCDMDVFDAYLPWRRNLSDLFQWAVSRALCSPPACSAFPRGAISSEAVCKPLCARQSFTLAREACRSYSHVVLKEVRFFNLQVLYPLLSDPALNLRIVHLVRDPRAVLRSREQTAKALARDNGIVLGTNGTWVEADPGLRVVREVCRSHVRIAEAATLKPPPFLRGRYRLVRFEDLAREPLAEIRALYAFTGLSLTPQLEAWIHNITHGSGPGARREAFKTSSRNALNVSQAWRHALPFAKIRRVQELCAGALQLLGYRPVYSEDEQRNLALDLVLPRGLNGFTWASSTASHPRN.

The Cytoplasmic portion of the chain corresponds to 1 to 5 (MWLPR). Residues 6–26 (VSSTAVTALLLAQTFLLLFLV) form a helical; Signal-anchor for type II membrane protein membrane-spanning segment. The Lumenal portion of the chain corresponds to 27-395 (SRPGPSSPAG…ASSTASHPRN (369 aa)). 49-55 (WRSGSSF) provides a ligand contact to 3'-phosphoadenylyl sulfate. A glycan (N-linked (GlcNAc...) asparagine) is linked at Asn116. 202 to 210 (RDPRAVLRS) serves as a coordination point for 3'-phosphoadenylyl sulfate. Residues Asn229, Asn305, and Asn328 are each glycosylated (N-linked (GlcNAc...) asparagine).

It belongs to the sulfotransferase 1 family. Gal/GlcNAc/GalNAc subfamily. As to expression, expressed in cornea. Mainly expressed in brain. Also expressed in spinal cord and trachea.

Its subcellular location is the golgi apparatus membrane. The catalysed reaction is 3'-phosphoadenylyl sulfate + keratan = adenosine 3',5'-bisphosphate + keratan 6'-sulfate.. In terms of biological role, sulfotransferase that utilizes 3'-phospho-5'-adenylyl sulfate (PAPS) as sulfonate donor to catalyze the transfer of sulfate to position 6 of non-reducing N-acetylglucosamine (GlcNAc) residues of keratan. Cooperates with B4GALT4 galactosyltransferase and B3GNT7 N-acetylglucosaminyltransferase to construct and elongate the sulfated disaccharide unit [-&gt;3Galbeta1-&gt;4(6-sulfoGlcNAcbeta)1-&gt;] within keratan sulfate polymer. Involved in biosynthesis of keratan sulfate in cornea, with an impact on proteoglycan fibril organization and corneal transparency. Involved in sulfation of endothelial mucins such as GLYCAM1. This is Carbohydrate sulfotransferase 6 from Homo sapiens (Human).